We begin with the raw amino-acid sequence, 332 residues long: Glycerol-3-phosphate dehydrogenase [NAD(P)+] (332 aa).

Trp-11, Arg-30, and Lys-108 together coordinate NADPH. Lys-108, Gly-137, and Ser-139 together coordinate sn-glycerol 3-phosphate. Ala-141 contributes to the NADPH binding site. 5 residues coordinate sn-glycerol 3-phosphate: Lys-192, Asp-245, Ser-255, Arg-256, and Asn-257. Residue Lys-192 is the Proton acceptor of the active site. Residue Arg-256 participates in NADPH binding. Residues Val-280 and Glu-282 each coordinate NADPH.

The protein belongs to the NAD-dependent glycerol-3-phosphate dehydrogenase family.

The protein resides in the cytoplasm. It catalyses the reaction sn-glycerol 3-phosphate + NAD(+) = dihydroxyacetone phosphate + NADH + H(+). The catalysed reaction is sn-glycerol 3-phosphate + NADP(+) = dihydroxyacetone phosphate + NADPH + H(+). It functions in the pathway membrane lipid metabolism; glycerophospholipid metabolism. Catalyzes the reduction of the glycolytic intermediate dihydroxyacetone phosphate (DHAP) to sn-glycerol 3-phosphate (G3P), the key precursor for phospholipid synthesis. In Burkholderia lata (strain ATCC 17760 / DSM 23089 / LMG 22485 / NCIMB 9086 / R18194 / 383), this protein is Glycerol-3-phosphate dehydrogenase [NAD(P)+].